A 767-amino-acid chain; its full sequence is Two-component response regulator-like PRR73 (767 aa).

The segment at 1–64 (MGSACEAGTD…EPQQTDEQKE (64 aa)) is disordered. Positions 82–200 (RVLLVENDDS…ELKNLWQHVW (119 aa)) constitute a Response regulatory domain. A compositionally biased stretch (low complexity) spans 205–214 (SSSGSGSESG). 5 disordered regions span residues 205–272 (SSSG…QSSW), 312–388 (RWLP…NEPT), 476–546 (ASNQ…RGKV), 646–701 (ANYS…SGSG), and 727–767 (NFGK…DEDR). Over residues 238–252 (DNEDDDDNDEDDDDL) the composition is skewed to acidic residues. 3 stretches are compositionally biased toward polar residues: residues 263–272 (DNGSGTQSSW), 343–361 (RNSS…VNPT), and 488–497 (CSPQDNSSEA). The span at 518–531 (GSNGSSNNNDMGSS) shows a compositional bias: low complexity. Over residues 532 to 543 (TKNAITKPSSNR) the composition is skewed to polar residues. The span at 689 to 700 (GAGGGNGSGSGS) shows a compositional bias: gly residues. The CCT domain maps to 712–754 (REAALNKFRQKRKVRNFGKKVRYQSRKRLAEQRPRIRGQFVRQ). Positions 727 to 738 (NFGKKVRYQSRK) are enriched in basic residues.

It belongs to the ARR-like family.

Its subcellular location is the nucleus. In terms of biological role, controls photoperiodic flowering response. Seems to be one of the component of the circadian clock. Expression of several members of the ARR-like family is controlled by circadian rhythm. The particular coordinated sequential expression of PRR73, PRR37, PRR95, PRR59 and PPR1 result to circadian waves that may be at the basis of the endogenous circadian clock. This is Two-component response regulator-like PRR73 (PRR73) from Oryza sativa subsp. indica (Rice).